We begin with the raw amino-acid sequence, 24 residues long: Brevinin-1E (24 aa).

A disulfide bridge connects residues Cys18 and Cys24.

As to expression, expressed by the skin glands.

It localises to the secreted. Functionally, antimicrobial peptide. Stimulates insulin release by BRIN-BD11 cells in vitro. The protein is Brevinin-1E of Pelophylax saharicus (Sahara frog).